A 64-amino-acid chain; its full sequence is Lantibiotic actagardine (64 aa).

Positions 1–45 are excised as a propeptide; sequence MSALAIEKSWKDVDLRDGATSHPAGLGFGELTFEDLREDRTIYAA. Positions 46 to 51 form a cross-link, lanthionine (Ser-Cys); it reads SSGWVC. 2 cross-links (beta-methyllanthionine (Thr-Cys)) span residues 52–57 and 54–62; these read TLTIEC and TIECGTVIC. Positions 59–64 form a cross-link, beta-methyllanthionine sulfoxide (Thr-Cys); sequence TVICAC.

Belongs to the type B lantibiotic family. Post-translationally, maturation of lantibiotics involves the enzymatic conversion of Thr, and Ser into dehydrated AA by the enzyme garM and the formation of thioether bonds with cysteine. The 59-64 beta-methyllanthionine thioether bond is oxidized to a sulfoxide by the monooxygenase GarO. This is followed by membrane translocation and cleavage of the modified precursor. The sulfoxide group of the 59-64 beta-methyllanthionine thioether bond is mildly important for activity, since the antibacterial activity of deoxyactagardine is marginally lower compared with oxidized actagardine.

In terms of biological role, has potent antibacterial activity against some Gram-positive bacteria. Has good antistreptococcal activity. Inhibits cell wall biosynthesis by binding to lipid II and blocking transglycosylation. This chain is Lantibiotic actagardine, found in Actinoplanes garbadinensis.